The chain runs to 543 residues: Cytochrome P450 307a1 (543 aa).

A Phosphoserine modification is found at Ser-219. Positions 440–460 are disordered; it reads FLEPSKEQSPKNSKGSDSGIE. Positions 449–460 are enriched in polar residues; it reads PKNSKGSDSGIE. A heme-binding site is contributed by Cys-485.

The protein belongs to the cytochrome P450 family. Heme is required as a cofactor.

It localises to the endoplasmic reticulum membrane. It is found in the microsome membrane. Functionally, required for correct development of the embryonic midline glial cells which are necessary for the formation of distinct segmental commissures. This chain is Cytochrome P450 307a1 (spo), found in Drosophila melanogaster (Fruit fly).